Here is a 195-residue protein sequence, read N- to C-terminus: Large ribosomal subunit protein uL18 (195 aa).

This sequence belongs to the universal ribosomal protein uL18 family. In terms of assembly, part of the 50S ribosomal subunit. Contacts the 5S and 23S rRNAs.

Functionally, this is one of the proteins that bind and probably mediate the attachment of the 5S RNA into the large ribosomal subunit, where it forms part of the central protuberance. This is Large ribosomal subunit protein uL18 from Methanocaldococcus jannaschii (strain ATCC 43067 / DSM 2661 / JAL-1 / JCM 10045 / NBRC 100440) (Methanococcus jannaschii).